Reading from the N-terminus, the 364-residue chain is Fructose-bisphosphate aldolase A (364 aa).

The residue at position 5 (tyrosine 5) is a Phosphotyrosine. Threonine 9 carries the phosphothreonine modification. Phosphoserine is present on residues serine 36 and serine 39. Lysine 42 bears the N6-acetyllysine; alternate mark. Lysine 42 participates in a covalent cross-link: Glycyl lysine isopeptide (Lys-Gly) (interchain with G-Cter in SUMO1); alternate. Lysine 42 participates in a covalent cross-link: Glycyl lysine isopeptide (Lys-Gly) (interchain with G-Cter in SUMO2); alternate. Arginine 43 lines the beta-D-fructose 1,6-bisphosphate pocket. Serine 46 bears the Phosphoserine mark. An N6-(2-hydroxyisobutyryl)lysine modification is found at lysine 99. Lysine 108 is modified (N6-acetyllysine). An N6-acetyllysine; alternate modification is found at lysine 111. N6-malonyllysine; alternate is present on lysine 111. Phosphoserine is present on serine 132. Position 147 is an N6-(2-hydroxyisobutyryl)lysine (lysine 147). The Proton acceptor role is filled by glutamate 188. Lysine 230 acts as the Schiff-base intermediate with dihydroxyacetone-P in catalysis. Residue serine 272 is modified to Phosphoserine. Beta-D-fructose 1,6-bisphosphate is bound by residues 272-274 (SGG), serine 301, and arginine 304. The residue at position 312 (lysine 312) is an N6-malonyllysine. The residue at position 330 (lysine 330) is an N6-acetyllysine.

The protein belongs to the class I fructose-bisphosphate aldolase family. As to quaternary structure, homotetramer. Interacts with SNX9 and WAS. Interacts with FBP2; the interaction blocks FBP2 inhibition by physiological concentrations of AMP and reduces inhibition by Ca(2+).

The protein resides in the cytoplasm. Its subcellular location is the myofibril. It is found in the sarcomere. It localises to the i band. The protein localises to the m line. It catalyses the reaction beta-D-fructose 1,6-bisphosphate = D-glyceraldehyde 3-phosphate + dihydroxyacetone phosphate. The protein operates within carbohydrate degradation; glycolysis; D-glyceraldehyde 3-phosphate and glycerone phosphate from D-glucose: step 4/4. In terms of biological role, catalyzes the reversible conversion of beta-D-fructose 1,6-bisphosphate (FBP) into two triose phosphate and plays a key role in glycolysis and gluconeogenesis. In addition, may also function as scaffolding protein. The chain is Fructose-bisphosphate aldolase A from Homo sapiens (Human).